Consider the following 804-residue polypeptide: Leucine--tRNA ligase (804 aa).

Positions 40-51 (PYPSGAGLHVGH) match the 'HIGH' region motif. The 'KMSKS' region signature appears at 576–580 (KMSKS). Lysine 579 contributes to the ATP binding site.

It belongs to the class-I aminoacyl-tRNA synthetase family.

The protein localises to the cytoplasm. It catalyses the reaction tRNA(Leu) + L-leucine + ATP = L-leucyl-tRNA(Leu) + AMP + diphosphate. This chain is Leucine--tRNA ligase, found in Staphylococcus aureus (strain MRSA252).